The chain runs to 168 residues: MGSSKSSKKDKQIHPFGTDVSTFRKLSSKEKKKLDEKELKQYKKLKHKVKKLKKEERERSSIKNTKTLAEDPMVKNVAENDHDQMKNSLSRSQDKGNTDYWLAASLSGGNQRKSKFLKMLGIKNAASITESSPSAQSNKTNDKQREKELEQQYMHGVLHKGTKKGLGM.

3 disordered regions span residues 1–35 (MGSS…KKLD), 48–97 (KVKK…DKGN), and 126–168 (ASIT…GLGM). A coiled-coil region spans residues 29-95 (KEKKKLDEKE…KNSLSRSQDK (67 aa)). Residues 68–85 (LAEDPMVKNVAENDHDQM) are compositionally biased toward basic and acidic residues. Positions 126 to 139 (ASITESSPSAQSNK) are enriched in polar residues. Residues 140-150 (TNDKQREKELE) are compositionally biased toward basic and acidic residues. Basic residues predominate over residues 157–168 (VLHKGTKKGLGM).

This is an uncharacterized protein from Schizosaccharomyces pombe (strain 972 / ATCC 24843) (Fission yeast).